Reading from the N-terminus, the 1807-residue chain is Phospholipase D (1807 aa).

The interval 1 to 28 (MPGPDDDVREPTAAARTNNSGYGLRAAP) is disordered. Transmembrane regions (helical) follow at residues 257–277 (IAFVSAIVGFIFPICLVIVTS), 305–325 (AGVFLGLAVLGGILFFAVFVY), and 587–607 (VYYILFLFAGGIIAPVVGFLA). The tract at residues 697–734 (TASRMGTGNLAPASSRVDSSTQSEDSFEAPKPPPSSVS) is disordered. PLD phosphodiesterase domains are found at residues 853-880 (GFWSHHEKIVCIDQSLAFVGGLDLCFGR) and 1249-1276 (EQIYIHSKLMIADDRCAILGSANINDRS). Residues H858, K860, D865, H1254, K1256, and D1261 contribute to the active site. Composition is skewed to polar residues over residues 1531–1547 (FSRSNSVSTPTNFSQLD), 1568–1578 (YNSNSMPSNAS), and 1597–1614 (YPNSPSVASFQHTPQSPA). The interval 1531–1621 (FSRSNSVSTP…SPAIATGARS (91 aa)) is disordered.

The protein belongs to the phospholipase D family. TM-PLD subfamily.

The protein localises to the membrane. It carries out the reaction a 1,2-diacyl-sn-glycero-3-phosphocholine + H2O = a 1,2-diacyl-sn-glycero-3-phosphate + choline + H(+). Functionally, hydrolyzes glycerol-phospholipids at the terminal phosphodiesteric bond. This Phytophthora infestans (Potato late blight agent) protein is Phospholipase D.